Consider the following 152-residue polypeptide: Transcriptional repressor NrdR (152 aa).

Residues 3 to 34 (CPFCHNEQSRVIDSRVIDSGTSIRRRRECAAC) fold into a zinc finger. Positions 46–136 (LSVVKRNGLA…VYKSFESADD (91 aa)) constitute an ATP-cone domain.

The protein belongs to the NrdR family. The cofactor is Zn(2+).

In terms of biological role, negatively regulates transcription of bacterial ribonucleotide reductase nrd genes and operons by binding to NrdR-boxes. The sequence is that of Transcriptional repressor NrdR from Corynebacterium aurimucosum (strain ATCC 700975 / DSM 44827 / CIP 107346 / CN-1) (Corynebacterium nigricans).